A 253-amino-acid polypeptide reads, in one-letter code: MMLLQLNNVSVGTRLASFSSQVTTGLQIHLIGPNGAGKSTLLASLAGLLPASGEIVLAGKSLQHYEGHELARQRAYLSQQQSALSLMPVFQYLSLYQPAGANSQAVATAISYICNKLRLTDKLPRMLSHLSGGEWQRVRLAAVFLQVWPDINPDSKLLLLDEPYSGLDVAQKVALDALLVEFCRSGRSVIISGHDLNHTLQQADEVWLLAQGQVLVQGETQQVMRADVLSQVFEVDFQIHNFNKQQWITTRSV.

Residues Leu4–Asp236 form the ABC transporter domain. Gly32–Ser39 contributes to the ATP binding site.

It belongs to the ABC transporter superfamily. Vitamin B12 importer (TC 3.A.1.13.1) family. The complex is composed of two ATP-binding proteins (BtuD), two transmembrane proteins (BtuC) and a solute-binding protein (BtuF).

The protein resides in the cell inner membrane. It catalyses the reaction an R-cob(III)alamin(out) + ATP + H2O = an R-cob(III)alamin(in) + ADP + phosphate + H(+). Part of the ABC transporter complex BtuCDF involved in vitamin B12 import. Responsible for energy coupling to the transport system. The protein is Vitamin B12 import ATP-binding protein BtuD of Yersinia pestis.